A 294-amino-acid polypeptide reads, in one-letter code: Tryptophan 2,3-dioxygenase 1 (294 aa).

Residues 1–20 form a disordered region; the sequence is MSEPIQPTRPAASGCPMHGA. Substrate is bound by residues 63-67, Tyr125, and Arg129; that span reads FIVQH. A heme-binding site is contributed by His252. Thr266 provides a ligand contact to substrate.

Belongs to the tryptophan 2,3-dioxygenase family. In terms of assembly, homotetramer. Heme serves as cofactor.

The enzyme catalyses L-tryptophan + O2 = N-formyl-L-kynurenine. It functions in the pathway amino-acid degradation; L-tryptophan degradation via kynurenine pathway; L-kynurenine from L-tryptophan: step 1/2. Functionally, heme-dependent dioxygenase that catalyzes the oxidative cleavage of the L-tryptophan (L-Trp) pyrrole ring and converts L-tryptophan to N-formyl-L-kynurenine. Catalyzes the oxidative cleavage of the indole moiety. The polypeptide is Tryptophan 2,3-dioxygenase 1 (Ralstonia nicotianae (strain ATCC BAA-1114 / GMI1000) (Ralstonia solanacearum)).